A 172-amino-acid polypeptide reads, in one-letter code: RNA silencing suppressor p19 (172 aa).

Residues glutamate 153 to glutamate 172 are disordered.

The protein belongs to the tombusvirus protein p19 family. As to quaternary structure, homodimer.

Functionally, viral suppressor of RNA silencing which binds specifically to silencing RNAs (siRNAs). Acts as a molecular caliper to specifically select siRNAs based on the length of the duplex region of the RNA. The chain is RNA silencing suppressor p19 from Pelargonium zonale (PeNSV).